The sequence spans 63 residues: Metallothionein (63 aa).

A beta region spans residues Met1–Cys30. The a divalent metal cation site is built by Cys6, Cys8, Cys14, Cys16, Cys20, Cys22, Cys25, Cys27, Cys30, Cys34, Cys35, Cys37, Cys38, Cys42, Cys45, Cys49, Cys51, Cys59, Cys61, and Cys62. Residues Arg31–His63 form an alpha region.

This sequence belongs to the metallothionein superfamily. Type 1 family.

Its function is as follows. Metallothioneins have a high content of cysteine residues that bind various heavy metals. The protein is Metallothionein of Anas platyrhynchos (Mallard).